The primary structure comprises 329 residues: Alpha/beta hydrolase domain-containing protein 17C (329 aa).

A disordered region spans residues 46–85 (APEQRGPGAPAPASAASTSSASAAAQPAPQQPEEGGAGPG). Low complexity predominate over residues 51-79 (GPGAPAPASAASTSSASAAAQPAPQQPEE). Catalysis depends on charge relay system residues serine 211, aspartate 276, and histidine 305.

It belongs to the AB hydrolase superfamily. ABHD17 family. In terms of processing, palmitoylated on cysteine residues located in a cysteine cluster at the N-terminus which promotes membrane localization. Palmitoylation is required for post-synaptic localization and for depalmitoylating activity towards DLG4/PSD95.

Its subcellular location is the recycling endosome membrane. It is found in the cell projection. The protein localises to the dendritic spine. The protein resides in the postsynaptic density membrane. The enzyme catalyses S-hexadecanoyl-L-cysteinyl-[protein] + H2O = L-cysteinyl-[protein] + hexadecanoate + H(+). In terms of biological role, hydrolyzes fatty acids from S-acylated cysteine residues in proteins. Has depalmitoylating activity towards NRAS and DLG4/PSD95. This chain is Alpha/beta hydrolase domain-containing protein 17C, found in Bos taurus (Bovine).